Here is a 139-residue protein sequence, read N- to C-terminus: Acidic phospholipase A2 Ts-A4 (139 aa).

The first 16 residues, 1-16 (MRTLWILAVLLVGVEG), serve as a signal peptide directing secretion. Cystine bridges form between Cys42–Cys132, Cys44–Cys60, Cys59–Cys111, Cys65–Cys139, Cys66–Cys104, Cys73–Cys97, and Cys91–Cys102. Ca(2+) is bound by residues Tyr43, Gly45, and Gly47. His63 is a catalytic residue. Ca(2+) is bound at residue Asp64. The active site involves Asp105.

The cofactor is Ca(2+). Expressed by the venom gland.

It is found in the secreted. The enzyme catalyses a 1,2-diacyl-sn-glycero-3-phosphocholine + H2O = a 1-acyl-sn-glycero-3-phosphocholine + a fatty acid + H(+). PLA2 catalyzes the calcium-dependent hydrolysis of the 2-acyl groups in 3-sn-phosphoglycerides. The polypeptide is Acidic phospholipase A2 Ts-A4 (Trimeresurus stejnegeri (Chinese green tree viper)).